The chain runs to 195 residues: RFKKIRRLGALPGLTSKRPRSGSDLKNQLRSGKRSQYRIRLEEKQKLRFHYGLTERQLLKYVHIAGKAKGSTGQILLQLLEMRLDNILFRLGMASTIPGARQLVNHRHILVNGRIVDIPSYRCKPRDIITTKNKQRSKALIQNFIASYPHQEELPNHLTIDPFQYKGLVNQIIDSKWIGLKINELLVVEYYSRQT.

The S4 RNA-binding domain occupies 82-143 (MRLDNILFRL…KQRSKALIQN (62 aa)).

This sequence belongs to the universal ribosomal protein uS4 family. As to quaternary structure, part of the 30S ribosomal subunit. Contacts protein S5. The interaction surface between S4 and S5 is involved in control of translational fidelity.

Its subcellular location is the plastid. It localises to the chloroplast. One of the primary rRNA binding proteins, it binds directly to 16S rRNA where it nucleates assembly of the body of the 30S subunit. Its function is as follows. With S5 and S12 plays an important role in translational accuracy. The sequence is that of Small ribosomal subunit protein uS4c (rps4) from Pillansia templemannii.